The sequence spans 297 residues: UBX domain-containing protein 1 (297 aa).

An N-acetylalanine modification is found at Ala2. One can recognise a UBA domain in the interval 2 to 42 (AELTALESLIEMGFPRGRAEKALALTGNQGIEAAMDWLMEH). A disordered region spans residues 38 to 214 (WLMEHEDDPD…PPTKREYDQC (177 aa)). Positions 42–52 (HEDDPDVDEPL) are enriched in acidic residues. Residues 43–297 (EDDPDVDEPL…VLIVAKKCPS (255 aa)) are interaction with BRCA1. Basic and acidic residues-rich tracts occupy residues 86-122 (LTEE…EREK) and 137-177 (KLQE…ERAK). Ser199 is subject to Phosphoserine. At Ser200 the chain carries Phosphoserine; by MAPK12. Residues Thr207 and Thr229 each carry the phosphothreonine modification. A UBX domain is found at 209 to 291 (REYDQCRIQV…GLVPSAVLIV (83 aa)). Ser270 is subject to Phosphoserine.

In terms of assembly, interacts with MAVS; this interaction prevents MAVS oligomerization and thus disrupts the RLR signaling pathway. Interacts with CUL1; this interaction inhibits CUL1-mediated degradation of NF-kappa-B inhibitors. Interacts with BIRC2/c-IAP1; this interaction prevents TNFalpha-stimulated RIP1 ubiquitination and subsequent NF-kappa-B activation. Component of a complex required to couple retrotranslocation, ubiquitination and deglycosylation composed of NGLY1, SAKS1, AMFR, VCP and RAD23B. Interacts with HOMER2. Interacts directly with VCP. Interacts with BRCA1 and BARD1; interaction takes place when BRCA1 is not autoubiquitinated but is strongly enhanced in the presence of autoubiquitinated BRCA1.

The protein localises to the cytoplasm. In terms of biological role, ubiquitin-binding protein that plays a role in the modulation of innate immune response. Blocks both the RIG-I-like receptors (RLR) and NF-kappa-B pathways. Following viral infection, UBXN1 is induced and recruited to the RLR component MAVS. In turn, interferes with MAVS oligomerization, and disrupts the MAVS/TRAF3/TRAF6 signalosome. This function probably serves as a brake to prevent excessive RLR signaling. Interferes with the TNFalpha-triggered NF-kappa-B pathway by interacting with cellular inhibitors of apoptosis proteins (cIAPs) and thereby inhibiting their recruitment to TNFR1. Also prevents the activation of NF-kappa-B by associating with CUL1 and thus inhibiting NF-kappa-B inhibitor alpha/NFKBIA degradation that remains bound to NF-kappa-B. Interacts with the BRCA1-BARD1 heterodimer and regulates its activity. Specifically binds 'Lys-6'-linked polyubiquitin chains. Interaction with autoubiquitinated BRCA1 leads to the inhibition of the E3 ubiquitin-protein ligase activity of the BRCA1-BARD1 heterodimer. Component of a complex required to couple deglycosylation and proteasome-mediated degradation of misfolded proteins in the endoplasmic reticulum that are retrotranslocated in the cytosol. The polypeptide is UBX domain-containing protein 1 (Ubxn1) (Mus musculus (Mouse)).